A 706-amino-acid polypeptide reads, in one-letter code: Vitamin B12-dependent ribonucleoside-diphosphate reductase (706 aa).

In terms of domain architecture, ATP-cone spans 21-109 (AKVRRRDGTL…IYRQRRAELR (89 aa)). Substrate contacts are provided by residues Ser191, 206-207 (GC), Gly235, 389-393 (NPCGE), and 534-538 (PTGTI). Cys207 and Cys402 form a disulfide bridge. Catalysis depends on Asn389, which acts as the Proton acceptor. Catalysis depends on Cys391, which acts as the Cysteine radical intermediate. Glu393 (proton acceptor) is an active-site residue.

It belongs to the ribonucleoside diphosphate reductase class-2 family. The cofactor is adenosylcob(III)alamin.

It catalyses the reaction a 2'-deoxyribonucleoside 5'-diphosphate + [thioredoxin]-disulfide + H2O = a ribonucleoside 5'-diphosphate + [thioredoxin]-dithiol. Its function is as follows. Provides the precursors necessary for DNA synthesis. Catalyzes the biosynthesis of deoxyribonucleotides from the corresponding ribonucleotides. The chain is Vitamin B12-dependent ribonucleoside-diphosphate reductase (nrdZ) from Mycobacterium tuberculosis (strain ATCC 25618 / H37Rv).